A 402-amino-acid chain; its full sequence is Phosphomevalonate dehydratase large subunit (402 aa).

(R)-5-phosphomevalonate-binding residues include glycine 48, alanine 49, serine 50, asparagine 79, and proline 80. Cysteine 122 is a binding site for [4Fe-4S] cluster. (R)-5-phosphomevalonate-binding residues include glutamate 145 and serine 146. Residues cysteine 297 and cysteine 356 each coordinate [4Fe-4S] cluster. Lysine 377 is a binding site for (R)-5-phosphomevalonate.

Belongs to the AcnX type II large subunit family. Heterodimer composed of a large subunit (PMDh-L) and a small subunit (PMDh-S). It depends on [4Fe-4S] cluster as a cofactor.

It catalyses the reaction (R)-5-phosphomevalonate = (2E)-3-methyl-5-phosphooxypent-2-enoate + H2O. It functions in the pathway isoprenoid biosynthesis; isopentenyl diphosphate biosynthesis via mevalonate pathway. Its activity is regulated as follows. Neither the addition of 1 mM Mg(2+) nor 1 mM Mn(2+) has a significant effect on the activity, whereas Zn(2+) causes almost complete inactivation. Strongly inhibited by H(2)O(2), but not by EDTA or iodoacetamide. Component of a hydro-lyase that catalyzes the dehydration of mevalonate 5-phosphate (MVA5P) to form trans-anhydromevalonate 5-phosphate (tAHMP). Involved in the archaeal mevalonate (MVA) pathway, which provides fundamental precursors for isoprenoid biosynthesis, such as isopentenyl diphosphate (IPP) and dimethylallyl diphosphate (DMAPP). The polypeptide is Phosphomevalonate dehydratase large subunit (Aeropyrum pernix (strain ATCC 700893 / DSM 11879 / JCM 9820 / NBRC 100138 / K1)).